We begin with the raw amino-acid sequence, 1320 residues long: Sal-like protein 3 (1320 aa).

Residues 1 to 11 (MSRRKQAKPQH) show a composition bias toward basic residues. The segment at 1 to 49 (MSRRKQAKPQHLKSDEELPPQDGASEHGVPGDGAEDADSGSESRSGSEE) is disordered. A compositionally biased stretch (low complexity) spans 40–49 (GSESRSGSEE). The C2H2-type 1; atypical zinc finger occupies 51–73 (SVCEKCCAEFFKWADFLQHKKTC). 2 disordered regions span residues 84–166 (DDEP…AFSM) and 271–367 (LSAG…NLPN). Over residues 88-100 (APPSEDFPEPSPA) the composition is skewed to pro residues. Ser109 carries the phosphoserine modification. The span at 121-131 (SEVKAATKEAE) shows a compositional bias: basic and acidic residues. Residues 143–160 (PPGPSVPPPPPALPPQPE) show a composition bias toward pro residues. Residues 271–289 (LSAGPATASAGSGSTLPAA) are compositionally biased toward low complexity. The span at 295-311 (HLSQPASGTSTPCSTSA) shows a compositional bias: polar residues. Composition is skewed to low complexity over residues 323–342 (STGP…GNAV) and 355–367 (PGPL…NLPN). 2 consecutive C2H2-type zinc fingers follow at residues 427–449 (HKCR…LRSH) and 455–477 (FKCN…FQRH). The tract at residues 534–623 (GLQLPPTVPG…RTGDAPVVGG (90 aa)) is disordered. The segment covering 543 to 554 (GTHNYTDSPSIT) has biased composition (polar residues). Residues 555–568 (PVSRSPQRPSPASS) are compositionally biased toward low complexity. A compositionally biased stretch (polar residues) spans 569 to 583 (ECTSLSPGLNNTESG). 3 consecutive C2H2-type zinc fingers follow at residues 692–714 (NQCV…YRTH), 720–742 (FKCK…FGVH), and 752–774 (HSCP…IRMH). Disordered regions lie at residues 807–846 (SSFD…PPSP) and 878–972 (VENG…GHPG). Residues 809–823 (FDDDIDENSMEEDSE) are compositionally biased toward acidic residues. Composition is skewed to low complexity over residues 834-846 (PLLS…PPSP) and 902-923 (RSAG…PAHS). Ser932 is subject to Phosphoserine. C2H2-type zinc fingers lie at residues 997–1019 (TVCG…YRSH), 1025–1047 (FVCT…LLTH), 1133–1155 (HNCQ…ERTH), and 1161–1183 (FGCT…MGTH). At Ser1197 the chain carries Phosphoserine.

This sequence belongs to the sal C2H2-type zinc-finger protein family. In terms of tissue distribution, in adult brain, testis and kidney. In lower levels also in adult ovaries and embryonic stem cells. In embryo in developing neuroectoderm of brain, inner ear and spinal cord. Also weakly and transiently expressed in embryonic branchial arches, notochord, limb buds and heart.

The protein localises to the nucleus. Functionally, probable transcription factor. The protein is Sal-like protein 3 (Sall3) of Mus musculus (Mouse).